We begin with the raw amino-acid sequence, 548 residues long: Hydroxylamine reductase (548 aa).

C3, C6, C15, and C21 together coordinate [4Fe-4S] cluster. Hybrid [4Fe-2O-2S] cluster contacts are provided by H239, E263, C307, C401, C429, C454, E489, and K491. At C401 the chain carries Cysteine persulfide.

Belongs to the HCP family. The cofactor is [4Fe-4S] cluster. Requires hybrid [4Fe-2O-2S] cluster as cofactor.

The protein localises to the cytoplasm. The enzyme catalyses A + NH4(+) + H2O = hydroxylamine + AH2 + H(+). Functionally, catalyzes the reduction of hydroxylamine to form NH(3) and H(2)O. This chain is Hydroxylamine reductase, found in Desulfosudis oleivorans (strain DSM 6200 / JCM 39069 / Hxd3) (Desulfococcus oleovorans).